The chain runs to 469 residues: 3-isopropylmalate dehydratase large subunit (469 aa).

Residues Cys-350, Cys-410, and Cys-413 each coordinate [4Fe-4S] cluster.

It belongs to the aconitase/IPM isomerase family. LeuC type 1 subfamily. Heterodimer of LeuC and LeuD. It depends on [4Fe-4S] cluster as a cofactor.

It catalyses the reaction (2R,3S)-3-isopropylmalate = (2S)-2-isopropylmalate. It functions in the pathway amino-acid biosynthesis; L-leucine biosynthesis; L-leucine from 3-methyl-2-oxobutanoate: step 2/4. Catalyzes the isomerization between 2-isopropylmalate and 3-isopropylmalate, via the formation of 2-isopropylmaleate. This chain is 3-isopropylmalate dehydratase large subunit, found in Rhodopseudomonas palustris (strain ATCC BAA-98 / CGA009).